Consider the following 509-residue polypeptide: Lysine--tRNA ligase (509 aa).

Mg(2+) contacts are provided by E418 and E425.

The protein belongs to the class-II aminoacyl-tRNA synthetase family. In terms of assembly, homodimer. Mg(2+) is required as a cofactor.

Its subcellular location is the cytoplasm. The enzyme catalyses tRNA(Lys) + L-lysine + ATP = L-lysyl-tRNA(Lys) + AMP + diphosphate. The polypeptide is Lysine--tRNA ligase (lysS) (Acinetobacter baylyi (strain ATCC 33305 / BD413 / ADP1)).